An 836-amino-acid polypeptide reads, in one-letter code: Periostin (836 aa).

Positions 1–21 (MIPFLPMFSLLLLLIVNPINA) are cleaved as a signal peptide. One can recognise an EMI domain in the interval 40-94 (GPNVCALQQILGTKKKYFSTCKNWYKKSICGQKTTVLYECCPGYMRMEGMKGCPA). Intrachain disulfides connect C44-C80, C69-C333, C79-C92, C208-C311, and C467-C472. Residue C60 is modified to S-cysteinyl cysteine. FAS1 domains lie at 97 to 230 (PIDH…DRVL), 234 to 365 (GTSI…DQVL), 368 to 492 (DSAK…REII), and 496 to 628 (EKSL…DKLL). The N-linked (GlcNAc...) asparagine glycan is linked to N599.

As to quaternary structure, homodimer. Interacts with BMP1 and fibronectin. Gamma-carboxylation is controversial. Gamma-carboxyglutamated; gamma-carboxyglutamate residues are formed by vitamin K dependent carboxylation; this may be required for calcium binding. According to a more recent report, does not contain vitamin K-dependent gamma-carboxyglutamate residues. In terms of tissue distribution, widely expressed with highest levels in aorta, stomach, lower gastrointestinal tract, placenta, uterus, thyroid tissue and breast. Expressed in the kidney. Expressed in the lung. Up-regulated in epithelial ovarian tumors. Not expressed in normal ovaries. Also highly expressed at the tumor periphery of lung carcinoma tissue but not within the tumor. Overexpressed in breast cancers.

The protein localises to the golgi apparatus. The protein resides in the secreted. Its subcellular location is the extracellular space. It localises to the extracellular matrix. Induces cell attachment and spreading and plays a role in cell adhesion. Enhances incorporation of BMP1 in the fibronectin matrix of connective tissues, and subsequent proteolytic activation of lysyl oxidase LOX. The sequence is that of Periostin (POSTN) from Homo sapiens (Human).